We begin with the raw amino-acid sequence, 219 residues long: Claudin-3 (219 aa).

The Cytoplasmic portion of the chain corresponds to methionine 1 to threonine 8. A helical transmembrane segment spans residues glycine 9–tryptophan 29. The Extracellular portion of the chain corresponds to arginine 30–arginine 80. The helical transmembrane segment at alanine 81 to alanine 101 threads the bilayer. The Cytoplasmic segment spans residues glutamine 102 to lysine 115. The helical transmembrane segment at isoleucine 116–serine 136 threads the bilayer. Topologically, residues tryptophan 137–methionine 159 are extracellular. A helical membrane pass occupies residues glycine 160–leucine 180. Topologically, residues cysteine 181 to valine 219 are cytoplasmic. Position 197 is a phosphotyrosine (tyrosine 197). Serine 198 is subject to Phosphoserine. The tract at residues tyrosine 218–valine 219 is interactions with TJP1, TJP2 and TJP3.

It belongs to the claudin family. In terms of assembly, can form homo- and heteropolymers with other CLDN. Homopolymers interact with CLDN1 and CLDN2 homopolymers. Interacts in cis (within the same plasma membrane) with CLDN19. Directly interacts with TJP1/ZO-1, TJP2/ZO-2 and TJP3/ZO-3. As to quaternary structure, (Microbial infection) Interacts with Clostridium perfringens enterotoxin CPE; the interaction may disrupt claudin assembly in tight junctions. Expressed in the lung. Expressed at high levels in the liver and at lower levels, in kidney and testis.

It localises to the cell junction. The protein resides in the tight junction. It is found in the cell membrane. Functionally, plays a major role in tight junction-specific obliteration of the intercellular space, through calcium-independent cell-adhesion activity. This is Claudin-3 (Cldn3) from Mus musculus (Mouse).